Reading from the N-terminus, the 340-residue chain is NAD kinase (340 aa).

Asp-66 acts as the Proton acceptor in catalysis. NAD(+)-binding positions include Asp-66–Gly-67, Arg-71, Asn-141–Asp-142, Lys-152, Asp-171, Thr-182–Ser-187, and Ala-206. The disordered stretch occupies residues Ala-321–Ser-340. Residues Glu-327–Ser-340 are compositionally biased toward basic and acidic residues.

It belongs to the NAD kinase family. A divalent metal cation is required as a cofactor.

It is found in the cytoplasm. The enzyme catalyses NAD(+) + ATP = ADP + NADP(+) + H(+). In terms of biological role, involved in the regulation of the intracellular balance of NAD and NADP, and is a key enzyme in the biosynthesis of NADP. Catalyzes specifically the phosphorylation on 2'-hydroxyl of the adenosine moiety of NAD to yield NADP. This chain is NAD kinase, found in Bifidobacterium longum (strain DJO10A).